A 183-amino-acid chain; its full sequence is Large ribosomal subunit protein uL5 (183 aa).

This sequence belongs to the universal ribosomal protein uL5 family. In terms of assembly, part of the 50S ribosomal subunit; part of the 5S rRNA/L5/L18/L25 subcomplex. Contacts the 5S rRNA and the P site tRNA. Forms a bridge to the 30S subunit in the 70S ribosome.

This is one of the proteins that bind and probably mediate the attachment of the 5S RNA into the large ribosomal subunit, where it forms part of the central protuberance. In the 70S ribosome it contacts protein S13 of the 30S subunit (bridge B1b), connecting the 2 subunits; this bridge is implicated in subunit movement. Contacts the P site tRNA; the 5S rRNA and some of its associated proteins might help stabilize positioning of ribosome-bound tRNAs. This is Large ribosomal subunit protein uL5 from Flavobacterium johnsoniae (strain ATCC 17061 / DSM 2064 / JCM 8514 / BCRC 14874 / CCUG 350202 / NBRC 14942 / NCIMB 11054 / UW101) (Cytophaga johnsonae).